A 301-amino-acid polypeptide reads, in one-letter code: Leucine-rich repeat-containing protein 30 (301 aa).

LRR repeat units follow at residues 72–93 (EVQK…VGKL), 95–116 (RIVV…VSLL), 118–139 (CLKV…LSLC), 141–163 (KLEV…ADLS), 164–185 (RLRK…VFSL), 187–208 (ELIF…IQHL), 210–231 (SLQI…LCLV), 233–254 (SLEL…LHLL), and 265–287 (MDKG…VEGG).

This Homo sapiens (Human) protein is Leucine-rich repeat-containing protein 30 (LRRC30).